A 204-amino-acid polypeptide reads, in one-letter code: DNA-directed RNA polymerase III subunit RPC8 (204 aa).

The interval 158-178 (VDTSPTGPSSAEAASSSEELP) is disordered. Residues 166 to 175 (SSAEAASSSE) are compositionally biased toward low complexity.

This sequence belongs to the eukaryotic RPB7/RPC8 RNA polymerase subunit family. Component of the RNA polymerase III complex consisting of 17 subunits: a ten-subunit horseshoe-shaped catalytic core composed of POLR3A/RPC1, POLR3B/RPC2, POLR1C/RPAC1, POLR1D/RPAC2, POLR3K/RPC10, POLR2E/RPABC1, POLR2F/RPABC2, POLR2H/RPABC3, POLR2K/RPABC4 and POLR2L/RPABC5; a mobile stalk composed of two subunits POLR3H/RPC8 and CRCP/RPC9, protruding from the core and functioning primarily in transcription initiation; and additional subunits homologous to general transcription factors of the RNA polymerase II machinery, POLR3C/RPC3-POLR3F/RPC6-POLR3G/RPC7 heterotrimer required for transcription initiation and POLR3D/RPC4-POLR3E/RPC5 heterodimer involved in both transcription initiation and termination. Interacts with CRCP/RPC9. POLR3H/RPC8 and CRCP/RPC9 probably form a Pol III subcomplex.

It is found in the nucleus. DNA-dependent RNA polymerase catalyzes the transcription of DNA into RNA using the four ribonucleoside triphosphates as substrates. Specific peripheric component of RNA polymerase III (Pol III) which synthesizes small non-coding RNAs including 5S rRNA, snRNAs, tRNAs and miRNAs from at least 500 distinct genomic loci. With CRCP/RPC9 forms a mobile stalk that protrudes from Pol III core and functions primarily in transcription initiation. Pol III plays a key role in sensing and limiting infection by intracellular bacteria and DNA viruses. Acts as nuclear and cytosolic DNA sensor involved in innate immune response. Can sense non-self dsDNA that serves as template for transcription into dsRNA. The non-self RNA polymerase III transcripts, such as Epstein-Barr virus-encoded RNAs (EBERs) induce type I interferon and NF-kappa-B through the RIG-I pathway. The chain is DNA-directed RNA polymerase III subunit RPC8 (POLR3H) from Bos taurus (Bovine).